The chain runs to 121 residues: Small ribosomal subunit protein uS13 (121 aa).

The disordered stretch occupies residues 93-121; sequence RGLPMRGQRTRTNARTRKGPRKAAQSLKK.

This sequence belongs to the universal ribosomal protein uS13 family. As to quaternary structure, part of the 30S ribosomal subunit. Forms a loose heterodimer with protein S19. Forms two bridges to the 50S subunit in the 70S ribosome.

Its function is as follows. Located at the top of the head of the 30S subunit, it contacts several helices of the 16S rRNA. In the 70S ribosome it contacts the 23S rRNA (bridge B1a) and protein L5 of the 50S subunit (bridge B1b), connecting the 2 subunits; these bridges are implicated in subunit movement. Contacts the tRNAs in the A and P-sites. This chain is Small ribosomal subunit protein uS13, found in Variovorax paradoxus (strain S110).